A 506-amino-acid polypeptide reads, in one-letter code: Procardosin-B (506 aa).

A signal peptide spans 1 to 24 (MGTPIKASLLALFLFFLLSPTAFS). The propeptide occupies 25-70 (VSNGGLLRVGLKKRKVDRLDQLRAHGVHMLGNARKDFGFRRTLSDS). In terms of domain architecture, Peptidase A1 spans 85–503 (YYGEIGIGTP…DYGKLRVGFA (419 aa)). D103 is a catalytic residue. A disulfide bond links C116 and C122. Residues N139 and N252 are each glycosylated (N-linked (GlcNAc...) asparagine). Residues C281 and C285 are joined by a disulfide bond. D290 is an active-site residue. The 103-residue stretch at 315–417 (VLNQQCKTLV…NEVCDQLPTS (103 aa)) folds into the Saposin B-type domain. Cystine bridges form between C320-C411, C345-C383, C351-C380, and C425-C462. N397 carries an N-linked (GlcNAc...) asparagine glycan.

The protein belongs to the peptidase A1 family. As to quaternary structure, heterodimer of a light chain and a heavy chain. An intermediate form is produced first, and undergoes proteolytic processing to remove the internal plant-specific insert (PSI) and the propeptide. Detected in pistils, but not in seeds, bracts, midribs, roots, leaves or stamen extracts. Detected in seeds. In stigmas and styles, detected in the transmitting tissue and in contiguous subepidermal layers at the longitudenal grooves of the stigma (at protein level).

Its subcellular location is the microsome membrane. It localises to the protein storage vacuole. It is found in the secreted. The protein resides in the cell wall. The protein localises to the extracellular space. Its subcellular location is the extracellular matrix. Its activity is regulated as follows. Inhibited by the specific aspartic proteinase inhibitors diazoacetyl-noleucine methyl ester and pepstatin. Its function is as follows. Aspartic protease. Cleaves alpha-lactalbumin but not beta-lactoglobulin. This is Procardosin-B from Cynara cardunculus (Cardoon).